Here is a 350-residue protein sequence, read N- to C-terminus: Dihydroorotase (350 aa).

Residues histidine 13 and histidine 15 each coordinate Zn(2+). Substrate is bound by residues 15–17 (HLR) and asparagine 41. Positions 99, 136, and 174 each coordinate Zn(2+). Position 99 is an N6-carboxylysine (lysine 99). Histidine 136 lines the substrate pocket. Leucine 219 serves as a coordination point for substrate. Residue aspartate 247 coordinates Zn(2+). The active site involves aspartate 247. Histidine 251 and alanine 263 together coordinate substrate.

This sequence belongs to the metallo-dependent hydrolases superfamily. DHOase family. Class II DHOase subfamily. In terms of assembly, homodimer. It depends on Zn(2+) as a cofactor.

The enzyme catalyses (S)-dihydroorotate + H2O = N-carbamoyl-L-aspartate + H(+). The protein operates within pyrimidine metabolism; UMP biosynthesis via de novo pathway; (S)-dihydroorotate from bicarbonate: step 3/3. Its function is as follows. Catalyzes the reversible cyclization of carbamoyl aspartate to dihydroorotate. This chain is Dihydroorotase, found in Allorhizobium ampelinum (strain ATCC BAA-846 / DSM 112012 / S4) (Agrobacterium vitis (strain S4)).